Consider the following 131-residue polypeptide: Small ribosomal subunit protein uS8 (131 aa).

This sequence belongs to the universal ribosomal protein uS8 family. In terms of assembly, part of the 30S ribosomal subunit. Contacts proteins S5 and S12.

In terms of biological role, one of the primary rRNA binding proteins, it binds directly to 16S rRNA central domain where it helps coordinate assembly of the platform of the 30S subunit. This is Small ribosomal subunit protein uS8 from Azobacteroides pseudotrichonymphae genomovar. CFP2.